Reading from the N-terminus, the 183-residue chain is Ferredoxin-2, mitochondrial (183 aa).

The transit peptide at 1 to 52 directs the protein to the mitochondrion; it reads MAASMARGGVSARVLLQAARGTWWNRPGGTSGSGEGVALGTTRKFQATGSRP. The tract at residues 45 to 65 is disordered; the sequence is FQATGSRPAGEEDAGGPERPG. A 2Fe-2S ferredoxin-type domain is found at 68–170; the sequence is VNVVFVDRSG…GAEFTLPKIT (103 aa). C105, C111, C114, and C151 together coordinate [2Fe-2S] cluster.

Belongs to the adrenodoxin/putidaredoxin family. In terms of assembly, component of the mitochondrial core iron-sulfur cluster (ISC) complex composed of NFS1, LYRM4, NDUFAB1, ISCU, FXN, and FDX2; this complex is a heterohexamer containing two copies of each monomer. Form a heterodimer complex with NFS1. Interacts (in both their reduced and oxidized states) with the cysteine desulfurase complex; this interaction stimulates cysteine desulfurase activity, and serves as a reductant for Fe-S cluster assembly. Requires [2Fe-2S] cluster as cofactor. In terms of tissue distribution, widely expressed, with highest levels in testis, kidney and brain (at protein level). Expressed in muscle (at protein level). Expressed in fibroblasts (at protein level).

The protein localises to the mitochondrion. It is found in the mitochondrion matrix. Its function is as follows. Electron donor, of the core iron-sulfur cluster (ISC) assembly complex, that acts to reduce the persulfide into sulfide during [2Fe-2S] clusters assembly on the scaffolding protein ISCU. The core iron-sulfur cluster (ISC) assembly complex is involved in the de novo synthesis of a [2Fe-2S] cluster, the first step of the mitochondrial iron-sulfur protein biogenesis. This process is initiated by the cysteine desulfurase complex (NFS1:LYRM4:NDUFAB1) that produces persulfide which is delivered on the scaffold protein ISCU in a FXN-dependent manner. Then this complex is stabilized by FDX2 which provides reducing equivalents to accomplish the [2Fe-2S] cluster assembly. Finally, the [2Fe-2S] cluster is transferred from ISCU to chaperone proteins, including HSCB, HSPA9 and GLRX5. Essential for coenzyme Q biosynthesis: together with FDXR, transfers the electrons required for the hydroxylation reaction performed by COQ6. This is Ferredoxin-2, mitochondrial from Homo sapiens (Human).